The sequence spans 198 residues: Carnitine operon protein CaiE (198 aa).

The interval 174–198 (KPLTQAEENRPRLKGTTDVKPKSAQ) is disordered. The span at 180–198 (EENRPRLKGTTDVKPKSAQ) shows a compositional bias: basic and acidic residues.

It belongs to the transferase hexapeptide repeat family.

It participates in amine and polyamine metabolism; carnitine metabolism. Overproduction of CaiE stimulates the activity of CaiB and CaiD. This chain is Carnitine operon protein CaiE, found in Salmonella typhimurium (strain LT2 / SGSC1412 / ATCC 700720).